Here is a 217-residue protein sequence, read N- to C-terminus: Adenylate kinase (217 aa).

Residue 11–16 coordinates ATP; the sequence is GAGKGT. An NMP region spans residues 31–60; sequence STGDMFREAMANKTPVGLEAKSYIDKGDLV. Residues Thr32, Arg37, 58 to 60, 86 to 89, and Gln93 contribute to the AMP site; these read DLV and GFPR. Positions 127–165 are LID; the sequence is ARFMCKNCGATYNKFSKKPKVEGTCDRCGGHEFYQREDD. Arg128 lines the ATP pocket. Cys131 and Cys134 together coordinate Zn(2+). Residue 137–138 participates in ATP binding; it reads TY. Residues Cys151 and Cys154 each coordinate Zn(2+). Residues Arg162 and Arg173 each contribute to the AMP site. Residue Gln201 participates in ATP binding.

It belongs to the adenylate kinase family. In terms of assembly, monomer.

The protein localises to the cytoplasm. It carries out the reaction AMP + ATP = 2 ADP. It participates in purine metabolism; AMP biosynthesis via salvage pathway; AMP from ADP: step 1/1. Its function is as follows. Catalyzes the reversible transfer of the terminal phosphate group between ATP and AMP. Plays an important role in cellular energy homeostasis and in adenine nucleotide metabolism. This chain is Adenylate kinase, found in Lactobacillus delbrueckii subsp. bulgaricus (strain ATCC 11842 / DSM 20081 / BCRC 10696 / JCM 1002 / NBRC 13953 / NCIMB 11778 / NCTC 12712 / WDCM 00102 / Lb 14).